A 424-amino-acid chain; its full sequence is Pachytene checkpoint protein 2 homolog (424 aa).

Position 171–178 (171–178 (GPPGTGKT)) interacts with ATP.

This sequence belongs to the AAA ATPase family. PCH2 subfamily.

Functionally, plays a key role in chromosome recombination and chromosome structure development during meiosis. Required at early steps in meiotic recombination that leads to non-crossovers pathways. Also needed for efficient completion of homologous synapsis by influencing crossover distribution along the chromosomes affecting both crossovers and non-crossovers pathways. This Danio rerio (Zebrafish) protein is Pachytene checkpoint protein 2 homolog (trip13).